Consider the following 192-residue polypeptide: Elongation factor P (192 aa).

The disordered stretch occupies residues 133–157; it reads EVTETTPGVKGDTAQGGDKPATLES.

Belongs to the elongation factor P family.

Its subcellular location is the cytoplasm. Its pathway is protein biosynthesis; polypeptide chain elongation. Involved in peptide bond synthesis. Stimulates efficient translation and peptide-bond synthesis on native or reconstituted 70S ribosomes in vitro. Probably functions indirectly by altering the affinity of the ribosome for aminoacyl-tRNA, thus increasing their reactivity as acceptors for peptidyl transferase. This Salinibacter ruber (strain DSM 13855 / M31) protein is Elongation factor P.